We begin with the raw amino-acid sequence, 346 residues long: Holliday junction branch migration complex subunit RuvB (346 aa).

Positions 4 to 185 (SDRIITASPF…FGIVSRLEFY (182 aa)) are large ATPase domain (RuvB-L). Residues leucine 24, arginine 25, glycine 66, lysine 69, threonine 70, threonine 71, 132-134 (EDY), arginine 175, tyrosine 185, and arginine 222 each bind ATP. Threonine 70 contacts Mg(2+). The tract at residues 186–256 (TSDELSKIVT…VADAALQMLD (71 aa)) is small ATPAse domain (RuvB-S). The tract at residues 259 to 346 (AAGLDVLDRK…AATPGLFNPD (88 aa)) is head domain (RuvB-H). Arginine 295, arginine 314, and arginine 319 together coordinate DNA.

It belongs to the RuvB family. Homohexamer. Forms an RuvA(8)-RuvB(12)-Holliday junction (HJ) complex. HJ DNA is sandwiched between 2 RuvA tetramers; dsDNA enters through RuvA and exits via RuvB. An RuvB hexamer assembles on each DNA strand where it exits the tetramer. Each RuvB hexamer is contacted by two RuvA subunits (via domain III) on 2 adjacent RuvB subunits; this complex drives branch migration. In the full resolvosome a probable DNA-RuvA(4)-RuvB(12)-RuvC(2) complex forms which resolves the HJ.

The protein resides in the cytoplasm. The enzyme catalyses ATP + H2O = ADP + phosphate + H(+). The RuvA-RuvB-RuvC complex processes Holliday junction (HJ) DNA during genetic recombination and DNA repair, while the RuvA-RuvB complex plays an important role in the rescue of blocked DNA replication forks via replication fork reversal (RFR). RuvA specifically binds to HJ cruciform DNA, conferring on it an open structure. The RuvB hexamer acts as an ATP-dependent pump, pulling dsDNA into and through the RuvAB complex. RuvB forms 2 homohexamers on either side of HJ DNA bound by 1 or 2 RuvA tetramers; 4 subunits per hexamer contact DNA at a time. Coordinated motions by a converter formed by DNA-disengaged RuvB subunits stimulates ATP hydrolysis and nucleotide exchange. Immobilization of the converter enables RuvB to convert the ATP-contained energy into a lever motion, pulling 2 nucleotides of DNA out of the RuvA tetramer per ATP hydrolyzed, thus driving DNA branch migration. The RuvB motors rotate together with the DNA substrate, which together with the progressing nucleotide cycle form the mechanistic basis for DNA recombination by continuous HJ branch migration. Branch migration allows RuvC to scan DNA until it finds its consensus sequence, where it cleaves and resolves cruciform DNA. This Nitrosomonas eutropha (strain DSM 101675 / C91 / Nm57) protein is Holliday junction branch migration complex subunit RuvB.